The following is a 188-amino-acid chain: Large ribosomal subunit protein eL18 (188 aa).

A disordered region spans residues 147 to 188; sequence EANKHFGPAPGVPHSHTKAHVRSKGRQFERARGRRTSKGYKK. Basic residues-rich tracts occupy residues 161–171 and 178–188; these read SHTKAHVRSKG and RGRRTSKGYKK.

The protein belongs to the eukaryotic ribosomal protein eL18 family.

The protein resides in the cytoplasm. The protein is Large ribosomal subunit protein eL18 (RpL18) of Diaphorina citri (Asian citrus psyllid).